Consider the following 154-residue polypeptide: 6,7-dimethyl-8-ribityllumazine synthase (154 aa).

Residues Trp-22, Ala-56–Glu-58, and Cys-80–Ile-82 contribute to the 5-amino-6-(D-ribitylamino)uracil site. Residue Asp-85–Thr-86 coordinates (2S)-2-hydroxy-3-oxobutyl phosphate. The Proton donor role is filled by His-88. Asn-113 is a 5-amino-6-(D-ribitylamino)uracil binding site. (2S)-2-hydroxy-3-oxobutyl phosphate is bound at residue Arg-127.

Belongs to the DMRL synthase family. As to quaternary structure, forms an icosahedral capsid composed of 60 subunits, arranged as a dodecamer of pentamers.

The catalysed reaction is (2S)-2-hydroxy-3-oxobutyl phosphate + 5-amino-6-(D-ribitylamino)uracil = 6,7-dimethyl-8-(1-D-ribityl)lumazine + phosphate + 2 H2O + H(+). It participates in cofactor biosynthesis; riboflavin biosynthesis; riboflavin from 2-hydroxy-3-oxobutyl phosphate and 5-amino-6-(D-ribitylamino)uracil: step 1/2. Functionally, catalyzes the formation of 6,7-dimethyl-8-ribityllumazine by condensation of 5-amino-6-(D-ribitylamino)uracil with 3,4-dihydroxy-2-butanone 4-phosphate. This is the penultimate step in the biosynthesis of riboflavin. The sequence is that of 6,7-dimethyl-8-ribityllumazine synthase from Xanthomonas axonopodis pv. citri (strain 306).